Reading from the N-terminus, the 671-residue chain is DNA ligase (671 aa).

NAD(+) is bound by residues 32–36 (DAEYD), 81–82 (SL), and glutamate 113. The active-site N6-AMP-lysine intermediate is lysine 115. NAD(+) contacts are provided by arginine 136, glutamate 173, lysine 290, and lysine 314. 4 residues coordinate Zn(2+): cysteine 408, cysteine 411, cysteine 426, and cysteine 432. Positions 593–671 (EIDSPFAGKT…EAEMIRLLGA (79 aa)) constitute a BRCT domain.

The protein belongs to the NAD-dependent DNA ligase family. LigA subfamily. Mg(2+) is required as a cofactor. It depends on Mn(2+) as a cofactor.

It carries out the reaction NAD(+) + (deoxyribonucleotide)n-3'-hydroxyl + 5'-phospho-(deoxyribonucleotide)m = (deoxyribonucleotide)n+m + AMP + beta-nicotinamide D-nucleotide.. In terms of biological role, DNA ligase that catalyzes the formation of phosphodiester linkages between 5'-phosphoryl and 3'-hydroxyl groups in double-stranded DNA using NAD as a coenzyme and as the energy source for the reaction. It is essential for DNA replication and repair of damaged DNA. The polypeptide is DNA ligase (Salmonella paratyphi B (strain ATCC BAA-1250 / SPB7)).